A 539-amino-acid polypeptide reads, in one-letter code: Probable malate:quinone oxidoreductase (539 aa).

Belongs to the MQO family. FAD is required as a cofactor.

The enzyme catalyses (S)-malate + a quinone = a quinol + oxaloacetate. It participates in carbohydrate metabolism; tricarboxylic acid cycle; oxaloacetate from (S)-malate (quinone route): step 1/1. This Sodalis glossinidius (strain morsitans) protein is Probable malate:quinone oxidoreductase.